A 354-amino-acid polypeptide reads, in one-letter code: Serine/threonine-protein kinase-transforming protein mos (354 aa).

A Protein kinase domain is found at 74-350; the sequence is VCLMHRLGSG…LLQRDLKAFR (277 aa). ATP contacts are provided by residues 80–88 and K101; that span reads LGSGGFGSV. D209 (proton acceptor) is an active-site residue.

Belongs to the protein kinase superfamily. Ser/Thr protein kinase family.

It catalyses the reaction L-seryl-[protein] + ATP = O-phospho-L-seryl-[protein] + ADP + H(+). The catalysed reaction is L-threonyl-[protein] + ATP = O-phospho-L-threonyl-[protein] + ADP + H(+). The sequence is that of Serine/threonine-protein kinase-transforming protein mos (V-MOS) from Moloney murine sarcoma virus (strain ts110) (MoMSV).